The primary structure comprises 94 residues: Integration host factor subunit beta (94 aa).

The protein belongs to the bacterial histone-like protein family. Heterodimer of an alpha and a beta chain.

This protein is one of the two subunits of integration host factor, a specific DNA-binding protein that functions in genetic recombination as well as in transcriptional and translational control. This chain is Integration host factor subunit beta, found in Histophilus somni (strain 129Pt) (Haemophilus somnus).